The sequence spans 412 residues: MATSRLPAVPEETTILMAKEELEALRTAFESGDIPQAASRLRELLANSETTRLEVGVTGESGAGKSSLINALRGLGAEDPGAALTGVVETTMQPSPYPHPQFPDVTLWDLPGAGSPGCSADKYLKQVDFGRYDFFLLVSPRRCGAVELPPSLLRSCARGRSFTLCAPRWTRIWRPPAARGPRVSARLQLLQEIRDHCTERLRVAGVNDPRIFLVSNLSPTRYDFPMLVTTWEHDLPAHRRHAGLLSLPDISLEALQKKKDMLQEQVLKTALVSGVIQALPVPGLAAAYDDALLIRSLRGYHRSFGLDDDSLAKLAEQVGKQAGDLRSVIRSPLANEVSPETVLRLYSQSSDGAMRVARAFERGIPVSARWWPGVSASARSTPCSRAVSMRWLRTPNASASKPWRKMSPRGVR.

The region spanning 51-234 (TRLEVGVTGE…PMLVTTWEHD (184 aa)) is the IRG-type G domain. GTP contacts are provided by residues 60–67 (ESGAGKSS), 85–89 (TGVVE), and 215–217 (SNL). Residues serine 246 and serine 303 each carry the phosphoserine modification.

It belongs to the TRAFAC class dynamin-like GTPase superfamily. IRG family. As to quaternary structure, interacts with PLIN2/ADRP and COX4I1/COXIV. Expressed in spermatozoa tails from the testis and epididymis, where it may be a component of the fibrous sheath (at protein level).

The protein localises to the cell projection. It localises to the cilium. Its subcellular location is the flagellum. The protein resides in the lipid droplet. It carries out the reaction GTP + H2O = GDP + phosphate + H(+). Functionally, required for sperm motility and therefore male fertility, via positive regulation of spermatozoa fibrous sheath formation. The sequence is that of Interferon-inducible GTPase 5 from Mus musculus (Mouse).